Reading from the N-terminus, the 445-residue chain is Xylose isomerase (445 aa).

Catalysis depends on residues H107 and D110. Mg(2+) is bound by residues E238, E274, H277, D302, D313, D315, and D345.

This sequence belongs to the xylose isomerase family. As to quaternary structure, homotetramer. Requires Mg(2+) as cofactor.

It is found in the cytoplasm. The enzyme catalyses alpha-D-xylose = alpha-D-xylulofuranose. In Bacillus pumilus (strain SAFR-032), this protein is Xylose isomerase.